Consider the following 130-residue polypeptide: S-adenosylmethionine decarboxylase proenzyme (130 aa).

Residue S78 is the Schiff-base intermediate with substrate; via pyruvic acid of the active site. Residue S78 is modified to Pyruvic acid (Ser); by autocatalysis. Residue H83 is the Proton acceptor; for processing activity of the active site. The Proton donor; for catalytic activity role is filled by C98.

Belongs to the prokaryotic AdoMetDC family. Type 1 subfamily. Heterotetramer of two alpha and two beta chains arranged as a dimer of alpha/beta heterodimers. Pyruvate serves as cofactor. Is synthesized initially as an inactive proenzyme. Formation of the active enzyme involves a self-maturation process in which the active site pyruvoyl group is generated from an internal serine residue via an autocatalytic post-translational modification. Two non-identical subunits are generated from the proenzyme in this reaction, and the pyruvate is formed at the N-terminus of the alpha chain, which is derived from the carboxyl end of the proenzyme. The post-translation cleavage follows an unusual pathway, termed non-hydrolytic serinolysis, in which the side chain hydroxyl group of the serine supplies its oxygen atom to form the C-terminus of the beta chain, while the remainder of the serine residue undergoes an oxidative deamination to produce ammonia and the pyruvoyl group blocking the N-terminus of the alpha chain.

It carries out the reaction S-adenosyl-L-methionine + H(+) = S-adenosyl 3-(methylsulfanyl)propylamine + CO2. It participates in amine and polyamine biosynthesis; S-adenosylmethioninamine biosynthesis; S-adenosylmethioninamine from S-adenosyl-L-methionine: step 1/1. Functionally, catalyzes the decarboxylation of S-adenosylmethionine to S-adenosylmethioninamine (dcAdoMet), the propylamine donor required for the synthesis of the polyamines spermine and spermidine from the diamine putrescine. The polypeptide is S-adenosylmethionine decarboxylase proenzyme (Aeropyrum pernix (strain ATCC 700893 / DSM 11879 / JCM 9820 / NBRC 100138 / K1)).